The primary structure comprises 509 residues: Transcription factor SOX-9 (509 aa).

Disordered stretches follow at residues 1–67 (MNLL…SEED) and 160–273 (RLRV…FRDV). Over residues 30-41 (SAGSPCPSGSGS) the composition is skewed to low complexity. The segment covering 42–52 (DTENTRPQENT) has biased composition (polar residues). Basic and acidic residues-rich tracts occupy residues 56-67 (GEPDLKKESEED) and 160-174 (RLRV…DYKY). The dimerization (DIM) stretch occupies residues 63–103 (ESEEDKFPVCIREAVSQVLKGYDWTLVPMPVRVNGSSKNKP). A PQA region spans residues 63 to 103 (ESEEDKFPVCIREAVSQVLKGYDWTLVPMPVRVNGSSKNKP). At S64 the chain carries Phosphoserine. The HMG box DNA-binding region spans 105–173 (VKRPMNAFMV…QHKKDHPDYK (69 aa)). At S211 the chain carries Phosphoserine. Residues 224–307 (PGEHSGQSQG…LPPNGHPGVP (84 aa)) are transactivation domain (TAM). 2 consecutive short sequence motifs (9aaTAD) follow at residues 275 to 284 (IGELSSDVIS) and 290 to 298 (DVNEFDQYL). A disordered region spans residues 334–415 (VWMSKQQAPP…HYSEQQQHSP (82 aa)). The segment covering 341–376 (APPPPPQQPPQAPPAPQAPPQPQAAPPQQPAAPPQQ) has biased composition (pro residues). The span at 380–415 (HTLTTLSSEPGQSQRTHIKTEQLSPSHYSEQQQHSP) shows a compositional bias: polar residues. A transactivation domain (TAC) region spans residues 394 to 509 (RTHIKTEQLS…QPVYTQLTRP (116 aa)). K398 participates in a covalent cross-link: Glycyl lysine isopeptide (Lys-Gly) (interchain with G-Cter in ubiquitin). Residues 460–468 (TGLYSTFTY) carry the 9aaTAD 3 motif. A disordered region spans residues 479-509 (PIADTSGVPSIPQTHSPQHWEQPVYTQLTRP). Positions 485 to 509 (GVPSIPQTHSPQHWEQPVYTQLTRP) are enriched in polar residues.

In terms of assembly, homodimer; homodimerization is required for activity. Interacts (via C-terminus) with ZNF219; forming a complex that binds to the COL2A1 promoter and activates COL2A1 expression. Interacts with DDRGK1. Interacts with EP300/p300. Interacts with beta-catenin (CTNNB1); inhibiting CTNNB1 activity by competing with the binding sites of TCF/LEF within CTNNB1. Acetylated; acetylation impairs nuclear localization and ability to transactivate expression of target genes. Deacetylated by SIRT1. In terms of processing, phosphorylation at Ser-64 and Ser-211 by PKA increases transcriptional activity and may help delay chondrocyte maturation downstream of PTHLH/PTHrP signaling. Phosphorylation at either Ser-64 or Ser-211 is required for sumoylation, but phosphorylation is not dependent on sumoylation. Phosphorylated on tyrosine residues; tyrosine dephosphorylation by PTPN11/SHP2 blocks SOX9 phosphorylation by PKA and subsequent SUMOylation. Post-translationally, sumoylated; phosphorylation at either Ser-64 or Ser-211 is required for sumoylation. Sumoylation is induced by BMP signaling pathway. Ubiquitinated; ubiquitination leads to proteasomal degradation and is negatively regulated by DDRGK1.

It localises to the nucleus. Transcription factor that plays a key role in chondrocytes differentiation and skeletal development. Specifically binds the 5'-ACAAAG-3' DNA motif present in enhancers and super-enhancers and promotes expression of genes important for chondrogenesis, including cartilage matrix protein-coding genes COL2A1, COL4A2, COL9A1, COL11A2 and ACAN, SOX5 and SOX6. Also binds to some promoter regions. Plays a central role in successive steps of chondrocyte differentiation. Absolutely required for precartilaginous condensation, the first step in chondrogenesis during which skeletal progenitors differentiate into prechondrocytes. Together with SOX5 and SOX6, required for overt chondrogenesis when condensed prechondrocytes differentiate into early stage chondrocytes, the second step in chondrogenesis. Later, required to direct hypertrophic maturation and block osteoblast differentiation of growth plate chondrocytes: maintains chondrocyte columnar proliferation, delays prehypertrophy and then prevents osteoblastic differentiation of chondrocytes by lowering beta-catenin (CTNNB1) signaling and RUNX2 expression. Also required for chondrocyte hypertrophy, both indirectly, by keeping the lineage fate of chondrocytes, and directly, by remaining present in upper hypertrophic cells and transactivating COL10A1 along with MEF2C. Low lipid levels are the main nutritional determinant for chondrogenic commitment of skeletal progenitor cells: when lipids levels are low, FOXO (FOXO1 and FOXO3) transcription factors promote expression of SOX9, which induces chondrogenic commitment and suppresses fatty acid oxidation. Mechanistically, helps, but is not required, to remove epigenetic signatures of transcriptional repression and deposit active promoter and enhancer marks at chondrocyte-specific genes. Acts in cooperation with the Hedgehog pathway-dependent GLI (GLI1 and GLI3) transcription factors. In addition to cartilage development, also acts as a regulator of proliferation and differentiation in epithelial stem/progenitor cells: involved in the lung epithelium during branching morphogenesis, by balancing proliferation and differentiation and regulating the extracellular matrix. Controls epithelial branching during kidney development. The polypeptide is Transcription factor SOX-9 (SOX9) (Callithrix jacchus (White-tufted-ear marmoset)).